Here is a 498-residue protein sequence, read N- to C-terminus: Aspartyl aminopeptidase (498 aa).

Histidine 91 contributes to the Zn(2+) binding site. Histidine 166 is a binding site for substrate. Aspartate 274 lines the Zn(2+) pocket. Glutamate 311 contacts substrate. Residues glutamate 312 and aspartate 363 each contribute to the Zn(2+) site. Substrate is bound by residues aspartate 363, histidine 366, lysine 391, and tyrosine 398. Histidine 463 contacts Zn(2+).

Belongs to the peptidase M18 family. In terms of assembly, tetrahedron-shaped homododecamer built from six homodimers. It depends on Zn(2+) as a cofactor. In terms of processing, the N-terminus is blocked.

The catalysed reaction is Release of an N-terminal aspartate or glutamate from a peptide, with a preference for aspartate.. Its activity is regulated as follows. Inhibited by zinc. Stimulated by calcium and bacitracin. The protein is Aspartyl aminopeptidase (dapA) of Aspergillus oryzae (strain ATCC 42149 / RIB 40) (Yellow koji mold).